Reading from the N-terminus, the 212-residue chain is Cytidylate kinase (212 aa).

7-15 provides a ligand contact to ATP; the sequence is GPAASGKGT.

This sequence belongs to the cytidylate kinase family. Type 1 subfamily.

It localises to the cytoplasm. The enzyme catalyses CMP + ATP = CDP + ADP. The catalysed reaction is dCMP + ATP = dCDP + ADP. The sequence is that of Cytidylate kinase from Rhodopseudomonas palustris (strain TIE-1).